Reading from the N-terminus, the 382-residue chain is 1-deoxy-D-xylulose 5-phosphate reductoisomerase (382 aa).

Residues Ser10, Gly11, Ser12, Ile13, Gly36, Lys37, Asn38, and Asn121 each contribute to the NADPH site. Lys122 contributes to the 1-deoxy-D-xylulose 5-phosphate binding site. Glu123 is a binding site for NADPH. Asp147 is a Mn(2+) binding site. Ser148, Glu149, Ser173, and His196 together coordinate 1-deoxy-D-xylulose 5-phosphate. Glu149 is a Mn(2+) binding site. Gly202 is a binding site for NADPH. Residues Ser209, Asn214, Lys215, and Glu218 each coordinate 1-deoxy-D-xylulose 5-phosphate. Mn(2+) is bound at residue Glu218.

This sequence belongs to the DXR family. It depends on Mg(2+) as a cofactor. Mn(2+) serves as cofactor.

It catalyses the reaction 2-C-methyl-D-erythritol 4-phosphate + NADP(+) = 1-deoxy-D-xylulose 5-phosphate + NADPH + H(+). It participates in isoprenoid biosynthesis; isopentenyl diphosphate biosynthesis via DXP pathway; isopentenyl diphosphate from 1-deoxy-D-xylulose 5-phosphate: step 1/6. Its function is as follows. Catalyzes the NADPH-dependent rearrangement and reduction of 1-deoxy-D-xylulose-5-phosphate (DXP) to 2-C-methyl-D-erythritol 4-phosphate (MEP). In Geobacillus kaustophilus (strain HTA426), this protein is 1-deoxy-D-xylulose 5-phosphate reductoisomerase.